We begin with the raw amino-acid sequence, 403 residues long: Soluble calcium-activated nucleotidase 1 (403 aa).

The Cytoplasmic segment spans residues 1-44 (MPIQPFDQREWNEPMHSLRISVGGLPVLASMTKATDPRFRPRWR). Residues 45–61 (VILTSFVGAALLWLLYS) form a helical; Signal-anchor for type II membrane protein membrane-spanning segment. The Lumenal portion of the chain corresponds to 62–403 (HHQTPVSGRP…SVKYEGIEFI (342 aa)). An N-linked (GlcNAc...) asparagine glycan is attached at Asn-90. Residues Ser-170, Asp-171, Glu-217, Glu-286, Ser-347, and Glu-398 each coordinate Ca(2+).

The protein belongs to the apyrase family. As to quaternary structure, monomer. Homodimer; dimerization is Ca(2+)-dependent. Requires Ca(2+) as cofactor. As to expression, detected in intestine, thymus, heart, lung, spleen, kidney, liver, testis, skeletal muscle and brain.

It is found in the endoplasmic reticulum membrane. Its subcellular location is the golgi apparatus. The protein resides in the golgi stack membrane. The enzyme catalyses a ribonucleoside 5'-diphosphate + H2O = a ribonucleoside 5'-phosphate + phosphate + H(+). Its function is as follows. Calcium-dependent nucleotidase with a preference for UDP. The order of activity with different substrates is UDP &gt; GDP &gt; IDP &gt;&gt; UTP &gt; CDP = GTP = ITP. Has very low activity towards ADP and even lower activity towards ATP. Does not hydrolyze AMP and GMP. Involved in proteoglycan synthesis. The chain is Soluble calcium-activated nucleotidase 1 (Cant1) from Rattus norvegicus (Rat).